The following is a 119-amino-acid chain: Small ribosomal subunit protein bS6 (119 aa).

This sequence belongs to the bacterial ribosomal protein bS6 family.

Its function is as follows. Binds together with bS18 to 16S ribosomal RNA. This Buchnera aphidicola subsp. Baizongia pistaciae (strain Bp) protein is Small ribosomal subunit protein bS6.